Consider the following 114-residue polypeptide: Fluoride-specific ion channel FluC 1 (114 aa).

Helical transmembrane passes span 28–48 (VFPW…GFLH), 56–76 (ILLL…TFQV), and 91–111 (IIYL…GSWL). Na(+) contacts are provided by glycine 66 and threonine 69.

Belongs to the fluoride channel Fluc/FEX (TC 1.A.43) family.

The protein resides in the cell membrane. The catalysed reaction is fluoride(in) = fluoride(out). Na(+) is not transported, but it plays an essential structural role and its presence is essential for fluoride channel function. Functionally, fluoride-specific ion channel. Important for reducing fluoride concentration in the cell, thus reducing its toxicity. This chain is Fluoride-specific ion channel FluC 1, found in Ligilactobacillus salivarius (strain UCC118) (Lactobacillus salivarius).